Reading from the N-terminus, the 456-residue chain is Histidine--tRNA ligase (456 aa).

Positions 1 to 11 (MTQNENPSAQS) are enriched in polar residues. The tract at residues 1–22 (MTQNENPSAQSGAKPEDKARPA) is disordered.

The protein belongs to the class-II aminoacyl-tRNA synthetase family. Homodimer.

The protein resides in the cytoplasm. The enzyme catalyses tRNA(His) + L-histidine + ATP = L-histidyl-tRNA(His) + AMP + diphosphate + H(+). This Cupriavidus pinatubonensis (strain JMP 134 / LMG 1197) (Cupriavidus necator (strain JMP 134)) protein is Histidine--tRNA ligase.